A 1280-amino-acid chain; its full sequence is Rho guanine nucleotide exchange factor 10-like protein (1280 aa).

Over residues Met-1–Pro-10 the composition is skewed to pro residues. Residues Met-1–Gly-94 are disordered. Acidic residues predominate over residues Glu-26–Thr-46. Position 40 is a phosphoserine (Ser-40). The span at Pro-78–Thr-89 shows a compositional bias: low complexity. 2 positions are modified to phosphotyrosine: Tyr-131 and Tyr-152. Positions Pro-161 to Leu-202 are disordered. The segment covering Glu-183–Lys-193 has biased composition (basic and acidic residues). Ser-279 carries the phosphoserine modification. The region spanning Val-314 to Gln-501 is the DH domain. Disordered stretches follow at residues Gln-1133–Arg-1163 and Pro-1186–Asp-1207.

Interacts with RHOA, RHOB and RHOC.

Its subcellular location is the cytoplasm. Functionally, acts as a guanine nucleotide exchange factor (GEF) for RHOA, RHOB and RHOC. This chain is Rho guanine nucleotide exchange factor 10-like protein (Arhgef10l), found in Mus musculus (Mouse).